Consider the following 169-residue polypeptide: GTP-dependent dephospho-CoA kinase (169 aa).

4 residues coordinate GTP: Asp45, Asp64, Lys66, and Glu121.

It belongs to the GTP-dependent DPCK family.

It catalyses the reaction 3'-dephospho-CoA + GTP = GDP + CoA + H(+). The protein operates within cofactor biosynthesis; coenzyme A biosynthesis. In terms of biological role, catalyzes the GTP-dependent phosphorylation of the 3'-hydroxyl group of dephosphocoenzyme A to form coenzyme A (CoA). In Methanosphaera stadtmanae (strain ATCC 43021 / DSM 3091 / JCM 11832 / MCB-3), this protein is GTP-dependent dephospho-CoA kinase.